Consider the following 1385-residue polypeptide: Defecation cycle abnormal dec-7 (1385 aa).

Residues 1–19 form the signal peptide; the sequence is MWTARHAVALLVVLTYAYS. An N-linked (GlcNAc...) asparagine glycan is attached at Asn-156. The tract at residues 234-262 is disordered; the sequence is SQTNYGAPNYQQAGAQSAANQQFSNPSQY. Low complexity predominate over residues 242-261; that stretch reads NYQQAGAQSAANQQFSNPSQ. Residues 285 to 450 form the NIDO domain; sequence QIYGKRKKRQ…GRWIHRVDEV (166 aa). Residues Asn-313, Asn-386, Asn-413, Asn-458, Asn-480, Asn-562, and Asn-583 are each glycosylated (N-linked (GlcNAc...) asparagine). The region spanning 681–840 is the AMOP domain; sequence GRNWPIDMCI…DHCEFYYWRR (160 aa). The region spanning 852-1088 is the VWFD domain; the sequence is AAGYIYGEPH…FWKIDGTNDK (237 aa). N-linked (GlcNAc...) asparagine glycans are attached at residues Asn-909, Asn-921, Asn-975, Asn-1009, and Asn-1124. Residues 1179–1238 form the Sushi domain; the sequence is ISCGPLLKKEGVVKTPPAANYLDGDKVVFSCKPKYYIHGDIERVCRNGTWSPGWWAWCRD. 2 disulfide bridges follow: Cys-1181–Cys-1223 and Cys-1209–Cys-1236. Asn-1225 carries N-linked (GlcNAc...) asparagine glycosylation. Residues 1251 to 1271 form a helical membrane-spanning segment; the sequence is LLSIFGISLIFVIFFCILWNI. Residues 1321–1385 are disordered; sequence MNQPSRPIPS…GNMRFETSAI (65 aa).

In terms of tissue distribution, highly expressed in the intestinal epithelia.

Its subcellular location is the membrane. It localises to the cell junction. In terms of biological role, may negatively regulate activity of innexin gap junction protein inx-16, thereby mediating the rhythmic frequency of the defecation motor program. Required for the clustering of inx-16 to the cell-cell junction of the intestinal epithelia. Probably dispensable for intestinal integrity. May be a cytokine receptor. The protein is Defecation cycle abnormal dec-7 of Caenorhabditis elegans.